Consider the following 5233-residue polypeptide: E3 ubiquitin-protein ligase highwire (5233 aa).

The segment at Val197–Pro230 is disordered. The segment covering Ala205 to Ala214 has biased composition (basic and acidic residues). Phosphoserine is present on residues Ser213 and Ser216. RCC1 repeat units follow at residues Asn615 to Val666, Asp669 to Lys724, and Lys768 to Leu818. Positions Arg680 to Lys700 are disordered. The span at Asn689–Lys700 shows a compositional bias: basic residues. Positions Thr900–Pro950 are disordered. Residues Asp908–Lys917 show a composition bias toward polar residues. RCC1 repeat units lie at residues Glu931 to Leu983, Ala984 to Ser1033, and Gly1035 to Pro1084. Disordered stretches follow at residues Leu1051–Pro1109 and Ala1287–Leu1327. The span at Arg1092–Gly1103 shows a compositional bias: polar residues. The span at Ala1287 to Gly1302 shows a compositional bias: low complexity. The PHR domain 1 stretch occupies residues Asn1436 to Leu1587. The disordered stretch occupies residues Ser1681–Arg1718. Positions Val1699–Lys1709 are enriched in polar residues. A PHR domain 2 region spans residues Ala2014–Ser2169. Disordered stretches follow at residues Ser2329–Asn2353 and Asn2580–Gln2604. Low complexity predominate over residues Gln2336 to Val2350. The interval Ala2885–Gly4082 is required for interaction with Rae1. The Filamin repeat unit spans residues Trp2906 to Lys3000. Disordered stretches follow at residues Pro3005–Arg3024, Lys3117–Gln3210, Gly3277–Thr3333, Thr3348–Pro3378, Pro3551–Arg3587, and Ala3901–Val3936. The segment covering Lys3176–Arg3191 has biased composition (basic and acidic residues). The span at Glu3192 to Gln3210 shows a compositional bias: acidic residues. Over residues Pro3282 to Glu3292 the composition is skewed to polar residues. Low complexity predominate over residues Thr3348 to Ser3371. The span at Gln3917–Gln3932 shows a compositional bias: low complexity. Residues His4195–His4374 enclose the DOC domain. Disordered regions lie at residues Ala4633–Leu4655 and Leu4680–Pro4702. Positions Ser4638–Gly4652 are enriched in gly residues. Zn(2+) contacts are provided by Cys4991, Cys4994, Cys5009, His5011, His5014, Cys5017, Cys5038, Cys5041, Cys5101, and Cys5104. An RING-type; atypical zinc finger spans residues Cys4991 to Lys5042. The segment at Tyr5096 to Gln5231 is tandem cysteine domain. The active site involves Cys5115. The Zn(2+) site is built by Cys5130, Cys5133, Cys5142, His5145, Cys5154, Cys5157, and Cys5158. Residue Cys5165 is part of the active site. Positions 5172, 5175, 5193, 5207, 5213, 5224, and 5227 each coordinate Zn(2+).

Belongs to the RING-Cys relay (RCR) family. Component of an E3 ubiquitin ligase complex composed of hiw, Rae1 and Fsn. Interacts with Rae1; the interaction with Rae1 may protect hiw from autophagy-mediated degradation. As to expression, express throughout the nervous system. Stage 13 embryos show expression in the central nervous system (CNS) at the longitudinal axon tracts around which the synaptic neuropil forms. Expression outside the CNS starts at stage 16 in presynaptic terminals at the periactive zone which surround the active zone. Expression at neuromuscular junctions (NMJ) and in the CNS is also seen in third instar larvae (at protein level).

It is found in the synapse. The protein resides in the cell projection. Its subcellular location is the axon. The catalysed reaction is [E2 ubiquitin-conjugating enzyme]-S-ubiquitinyl-L-cysteine + [acceptor protein]-L-threonine = [E2 ubiquitin-conjugating enzyme]-L-cysteine + [acceptor protein]-3-O-ubiquitinyl-L-threonine.. It participates in protein modification; protein ubiquitination. In terms of biological role, atypical E3 ubiquitin-protein ligase which specifically mediates ubiquitination of threonine and serine residues on target proteins, instead of ubiquitinating lysine residues. Shows esterification activity towards both threonine and serine, with a preference for threonine, and acts via two essential catalytic cysteine residues that relay ubiquitin to its substrate via thioester intermediates. Required in the presynaptic motoneuron to down-regulate the levels of wnd and restrain synaptic terminal growth at the neuromuscular junction (NMJ) together with Rae1 and Fsn. In Drosophila melanogaster (Fruit fly), this protein is E3 ubiquitin-protein ligase highwire.